The following is a 176-amino-acid chain: ATP-dependent protease subunit HslV (176 aa).

T2 is an active-site residue. Residues G157, C160, and T163 each coordinate Na(+).

Belongs to the peptidase T1B family. HslV subfamily. A double ring-shaped homohexamer of HslV is capped on each side by a ring-shaped HslU homohexamer. The assembly of the HslU/HslV complex is dependent on binding of ATP.

It localises to the cytoplasm. It catalyses the reaction ATP-dependent cleavage of peptide bonds with broad specificity.. With respect to regulation, allosterically activated by HslU binding. In terms of biological role, protease subunit of a proteasome-like degradation complex believed to be a general protein degrading machinery. This Enterobacter sp. (strain 638) protein is ATP-dependent protease subunit HslV.